We begin with the raw amino-acid sequence, 190 residues long: Pancreatic IgW, short secretory form (190 aa).

Residues 53-145 (PNITALVPSV…PPSNFRSMIS (93 aa)) enclose the Ig-like C1-type domain. Asparagine 54 is a glycosylation site (N-linked (GlcNAc...) asparagine). Cysteine 74 and cysteine 131 are disulfide-bonded. The N-linked (GlcNAc...) asparagine glycan is linked to asparagine 179.

Expressed in pancreas, spleen, epigonal organ and at low levels in several other tissues.

Its subcellular location is the secreted. The sequence is that of Pancreatic IgW, short secretory form from Ginglymostoma cirratum (Nurse shark).